We begin with the raw amino-acid sequence, 259 residues long: Global transcriptional regulator CodY (259 aa).

The segment at 1 to 155 is GAF domain; it reads MELLAKTRKL…SATVVGMEIL (155 aa). A DNA-binding region (H-T-H motif) is located at residues 203–222; the sequence is ASKIADRVGITRSVIVNALR. Ser215 carries the post-translational modification Phosphoserine.

The protein belongs to the CodY family.

Its subcellular location is the cytoplasm. Functionally, DNA-binding global transcriptional regulator which is involved in the adaptive response to starvation and acts by directly or indirectly controlling the expression of numerous genes in response to nutrient availability. During rapid exponential growth, CodY is highly active and represses genes whose products allow adaptation to nutrient depletion. The protein is Global transcriptional regulator CodY of Bacillus cytotoxicus (strain DSM 22905 / CIP 110041 / 391-98 / NVH 391-98).